Here is a 914-residue protein sequence, read N- to C-terminus: Trafficking kinesin-binding protein 2 (914 aa).

Residues 1 to 21 (MSQSQNAIFTSPTGEENLMNS) show a composition bias toward polar residues. The segment at 1–30 (MSQSQNAIFTSPTGEENLMNSNHRDSESIT) is disordered. Positions 48-353 (EEQLPQYRLK…QEEIKELRSR (306 aa)) constitute an HAP1 N-terminal domain. Positions 134–354 (QALLKRNHVL…EEIKELRSRS (221 aa)) form a coiled coil. The tract at residues 359–509 (HLYFSQSYGA…KQFFAEEWQR (151 aa)) is interaction with HGS. A Phosphoserine modification is found at Ser420. Disordered regions lie at residues 447–482 (QQTEDKSLLNQGSSSEEVAGSSQKMGQPGPSGDSDL) and 765–787 (QPLPKSLAIPSTPPNSPSHSPCP). Residues 454 to 471 (LLNQGSSSEEVAGSSQKM) show a composition bias toward polar residues. Pro residues predominate over residues 775–787 (STPPNSPSHSPCP).

This sequence belongs to the milton family. As to quaternary structure, interacts with GABA-A receptor and O-GlcNAc transferase. Interacts with HGS. Interacts with RHOT1/Miro-1 and RHOT2/Miro-2. In terms of processing, O-glycosylated. As to expression, widely expressed, with highest expression in heart.

The protein resides in the cytoplasm. The protein localises to the early endosome. It localises to the mitochondrion. May regulate endosome-to-lysosome trafficking of membrane cargo, including EGFR. The protein is Trafficking kinesin-binding protein 2 (TRAK2) of Homo sapiens (Human).